The chain runs to 260 residues: Methylthioribulose-1-phosphate dehydratase (260 aa).

The tract at residues 1–26 (MTPPTTGLPAENTTDDNDHLVQSDDP) is disordered. Positions 16 to 26 (DNDHLVQSDDP) are enriched in basic and acidic residues. A substrate-binding site is contributed by cysteine 109. Zn(2+) contacts are provided by histidine 127 and histidine 129. Residue glutamate 154 is the Proton donor/acceptor of the active site. Histidine 211 is a binding site for Zn(2+).

The protein belongs to the aldolase class II family. MtnB subfamily. It depends on Zn(2+) as a cofactor.

The protein localises to the cytoplasm. It catalyses the reaction 5-(methylsulfanyl)-D-ribulose 1-phosphate = 5-methylsulfanyl-2,3-dioxopentyl phosphate + H2O. Its pathway is amino-acid biosynthesis; L-methionine biosynthesis via salvage pathway; L-methionine from S-methyl-5-thio-alpha-D-ribose 1-phosphate: step 2/6. In terms of biological role, catalyzes the dehydration of methylthioribulose-1-phosphate (MTRu-1-P) into 2,3-diketo-5-methylthiopentyl-1-phosphate (DK-MTP-1-P). The polypeptide is Methylthioribulose-1-phosphate dehydratase (Podospora anserina (strain S / ATCC MYA-4624 / DSM 980 / FGSC 10383) (Pleurage anserina)).